The following is a 185-amino-acid chain: Ribosome-recycling factor (185 aa).

This sequence belongs to the RRF family.

The protein localises to the cytoplasm. Responsible for the release of ribosomes from messenger RNA at the termination of protein biosynthesis. May increase the efficiency of translation by recycling ribosomes from one round of translation to another. The chain is Ribosome-recycling factor from Actinobacillus succinogenes (strain ATCC 55618 / DSM 22257 / CCUG 43843 / 130Z).